A 601-amino-acid polypeptide reads, in one-letter code: Putative Lon protease homolog (601 aa).

The Lon proteolytic domain maps to 363–560 (GEIVGQINGL…YQACELLFGR (198 aa)). Active-site residues include Ser455 and Lys498.

The protein belongs to the peptidase S16 family.

The sequence is that of Putative Lon protease homolog from Haemophilus influenzae (strain ATCC 51907 / DSM 11121 / KW20 / Rd).